Consider the following 275-residue polypeptide: uncharacterized protein (275 aa).

4 residues coordinate Mg(2+): Glu71, Asp85, Ile87, and Asp88. Glu71 contacts substrate. 87-90 (IDGT) contributes to the substrate binding site. A run of 3 helical transmembrane segments spans residues 87-107 (IDGT…IAFV), 112-132 (PVLG…SVDG), and 178-198 (IVCL…RLAG). Asp208 contacts Mg(2+). Substrate is bound at residue Asp208.

The protein belongs to the inositol monophosphatase superfamily.

It is found in the cell membrane. This is an uncharacterized protein from Sinorhizobium fredii (strain NBRC 101917 / NGR234).